The sequence spans 238 residues: Sugar fermentation stimulation protein homolog (238 aa).

Belongs to the SfsA family.

The protein is Sugar fermentation stimulation protein homolog of Shewanella denitrificans (strain OS217 / ATCC BAA-1090 / DSM 15013).